Consider the following 175-residue polypeptide: MDLRAFIRLVPDFPKPGILFRDITPLLRDPAGFRAAIEQLAAGTATMGSLDYVVGIESRGFILGAALAQHLGLGFVPVRKPGKLPPPVLSQSYSLEYGQDQLQLHAHALRPGDRVVIVDDVIATGGTAAATAQLVAQSGAEVGGFAFLIELAFLSGRKLLPPEIPTHVVMVDESN.

Belongs to the purine/pyrimidine phosphoribosyltransferase family. Homodimer.

Its subcellular location is the cytoplasm. The catalysed reaction is AMP + diphosphate = 5-phospho-alpha-D-ribose 1-diphosphate + adenine. It functions in the pathway purine metabolism; AMP biosynthesis via salvage pathway; AMP from adenine: step 1/1. Its function is as follows. Catalyzes a salvage reaction resulting in the formation of AMP, that is energically less costly than de novo synthesis. The chain is Adenine phosphoribosyltransferase from Synechococcus sp. (strain JA-3-3Ab) (Cyanobacteria bacterium Yellowstone A-Prime).